The sequence spans 338 residues: Eukaryotic translation initiation factor 3 subunit H (338 aa).

The 133-residue stretch at 22–154 (VQCDGLAVMK…LKAYRLTPQA (133 aa)) folds into the MPN domain.

Belongs to the eIF-3 subunit H family. In terms of assembly, component of the eukaryotic translation initiation factor 3 (eIF-3) complex. The eIF-3 complex interacts with pix. Interacts with mxt.

The protein resides in the cytoplasm. Its function is as follows. Component of the eukaryotic translation initiation factor 3 (eIF-3) complex, which is involved in protein synthesis of a specialized repertoire of mRNAs and, together with other initiation factors, stimulates binding of mRNA and methionyl-tRNAi to the 40S ribosome. The eIF-3 complex specifically targets and initiates translation of a subset of mRNAs involved in cell proliferation. In Drosophila sechellia (Fruit fly), this protein is Eukaryotic translation initiation factor 3 subunit H.